Reading from the N-terminus, the 154-residue chain is Ribosome maturation factor RimP (154 aa).

Belongs to the RimP family.

It localises to the cytoplasm. Required for maturation of 30S ribosomal subunits. This chain is Ribosome maturation factor RimP, found in Ruthia magnifica subsp. Calyptogena magnifica.